The following is a 475-amino-acid chain: Aspartyl/glutamyl-tRNA(Asn/Gln) amidotransferase subunit B (475 aa).

This sequence belongs to the GatB/GatE family. GatB subfamily. Heterotrimer of A, B and C subunits.

The catalysed reaction is L-glutamyl-tRNA(Gln) + L-glutamine + ATP + H2O = L-glutaminyl-tRNA(Gln) + L-glutamate + ADP + phosphate + H(+). It catalyses the reaction L-aspartyl-tRNA(Asn) + L-glutamine + ATP + H2O = L-asparaginyl-tRNA(Asn) + L-glutamate + ADP + phosphate + 2 H(+). Functionally, allows the formation of correctly charged Asn-tRNA(Asn) or Gln-tRNA(Gln) through the transamidation of misacylated Asp-tRNA(Asn) or Glu-tRNA(Gln) in organisms which lack either or both of asparaginyl-tRNA or glutaminyl-tRNA synthetases. The reaction takes place in the presence of glutamine and ATP through an activated phospho-Asp-tRNA(Asn) or phospho-Glu-tRNA(Gln). The protein is Aspartyl/glutamyl-tRNA(Asn/Gln) amidotransferase subunit B of Chlorobaculum tepidum (strain ATCC 49652 / DSM 12025 / NBRC 103806 / TLS) (Chlorobium tepidum).